The sequence spans 263 residues: Phosphonoacetaldehyde hydrolase (263 aa).

The Nucleophile role is filled by D10. Residues D10 and A12 each contribute to the Mg(2+) site. The Schiff-base intermediate with substrate role is filled by K51. D184 provides a ligand contact to Mg(2+).

It belongs to the HAD-like hydrolase superfamily. PhnX family. As to quaternary structure, homodimer. The cofactor is Mg(2+).

The enzyme catalyses phosphonoacetaldehyde + H2O = acetaldehyde + phosphate + H(+). Functionally, involved in phosphonate degradation. The protein is Phosphonoacetaldehyde hydrolase of Bacteroides fragilis (strain ATCC 25285 / DSM 2151 / CCUG 4856 / JCM 11019 / LMG 10263 / NCTC 9343 / Onslow / VPI 2553 / EN-2).